Here is a 541-residue protein sequence, read N- to C-terminus: Atrial natriuretic peptide receptor 3 (541 aa).

Positions Met1–Gly26 are cleaved as a signal peptide. Over Gly27–Glu481 the chain is Extracellular. The N-linked (GlcNAc...) (complex) asparagine glycan is linked to Asn86. Chloride-binding residues include Ser106, Val135, and Cys136. 2 disulfides stabilise this stretch: Cys108/Cys136 and Cys213/Cys261. The N-linked (GlcNAc...) (high mannose) asparagine glycan is linked to Asn293. Asn394 carries N-linked (GlcNAc...) (complex) asparagine glycosylation. The helical transmembrane segment at Ser482–Phe504 threads the bilayer. The Cytoplasmic segment spans residues Arg505–Ala541.

It belongs to the ANF receptor family. In terms of assembly, homodimer; disulfide-linked. Dimers can also be formed through the C-terminal cysteine of isoform 2. Interacts with OSTN.

The protein localises to the cell membrane. Its function is as follows. Receptor for the natriuretic peptide hormones, binding with similar affinities atrial natriuretic peptide NPPA/ANP, brain natriuretic peptide NPPB/BNP, and C-type natriuretic peptide NPPC/CNP. May function as a clearance receptor for NPPA, NPPB and NPPC, regulating their local concentrations and effects. Acts as a regulator of osteoblast differentiation and bone growth by binding to its ligand osteocrin, thereby preventing binding between NPR3/NPR-C and natriuretic peptides, leading to increase cGMP production. The chain is Atrial natriuretic peptide receptor 3 (NPR3) from Homo sapiens (Human).